The sequence spans 318 residues: tRNA(Ile)-lysidine synthase (318 aa).

26–31 (SGGADS) is an ATP binding site.

It belongs to the tRNA(Ile)-lysidine synthase family.

It is found in the cytoplasm. The catalysed reaction is cytidine(34) in tRNA(Ile2) + L-lysine + ATP = lysidine(34) in tRNA(Ile2) + AMP + diphosphate + H(+). Its function is as follows. Ligates lysine onto the cytidine present at position 34 of the AUA codon-specific tRNA(Ile) that contains the anticodon CAU, in an ATP-dependent manner. Cytidine is converted to lysidine, thus changing the amino acid specificity of the tRNA from methionine to isoleucine. The protein is tRNA(Ile)-lysidine synthase of Nocardia farcinica (strain IFM 10152).